We begin with the raw amino-acid sequence, 278 residues long: HTH-type transcriptional activator RhaS (278 aa).

The HTH araC/xylS-type domain occupies 174–272 (NHLIAWLEDH…GWSPREIRQG (99 aa)). 2 consecutive DNA-binding regions (H-T-H motif) follow at residues 191–212 (EAIADRFALSLRTLHRQLKQHT) and 239–262 (VTHIAFSCGFADSNHFSTLFRREF).

Binds DNA as a dimer.

Its subcellular location is the cytoplasm. Functionally, activates expression of the rhaBAD and rhaT operons. This is HTH-type transcriptional activator RhaS from Escherichia fergusonii (strain ATCC 35469 / DSM 13698 / CCUG 18766 / IAM 14443 / JCM 21226 / LMG 7866 / NBRC 102419 / NCTC 12128 / CDC 0568-73).